The primary structure comprises 414 residues: Esterase FrsA (414 aa).

The protein belongs to the FrsA family.

It carries out the reaction a carboxylic ester + H2O = an alcohol + a carboxylate + H(+). In terms of biological role, catalyzes the hydrolysis of esters. This is Esterase FrsA from Escherichia coli (strain K12 / DH10B).